The following is a 451-amino-acid chain: Bifunctional protein GlmU (451 aa).

A pyrophosphorylase region spans residues Met1 to Arg229. Residues Leu8–Gly11, Lys22, Gln72, and Gly77–Thr78 each bind UDP-N-acetyl-alpha-D-glucosamine. Residue Asp102 participates in Mg(2+) binding. Positions 139, 154, and 227 each coordinate UDP-N-acetyl-alpha-D-glucosamine. Residue Asn227 participates in Mg(2+) binding. The interval Leu230–Asn250 is linker. The N-acetyltransferase stretch occupies residues Gly251–Lys451. UDP-N-acetyl-alpha-D-glucosamine is bound by residues Arg332 and Lys350. The active-site Proton acceptor is His362. Residues Tyr365 and Asn376 each coordinate UDP-N-acetyl-alpha-D-glucosamine. Residues Asn385–Tyr386, Ala422, and Arg439 each bind acetyl-CoA.

This sequence in the N-terminal section; belongs to the N-acetylglucosamine-1-phosphate uridyltransferase family. It in the C-terminal section; belongs to the transferase hexapeptide repeat family. As to quaternary structure, homotrimer. The cofactor is Mg(2+).

The protein localises to the cytoplasm. It carries out the reaction alpha-D-glucosamine 1-phosphate + acetyl-CoA = N-acetyl-alpha-D-glucosamine 1-phosphate + CoA + H(+). The catalysed reaction is N-acetyl-alpha-D-glucosamine 1-phosphate + UTP + H(+) = UDP-N-acetyl-alpha-D-glucosamine + diphosphate. Its pathway is nucleotide-sugar biosynthesis; UDP-N-acetyl-alpha-D-glucosamine biosynthesis; N-acetyl-alpha-D-glucosamine 1-phosphate from alpha-D-glucosamine 6-phosphate (route II): step 2/2. It participates in nucleotide-sugar biosynthesis; UDP-N-acetyl-alpha-D-glucosamine biosynthesis; UDP-N-acetyl-alpha-D-glucosamine from N-acetyl-alpha-D-glucosamine 1-phosphate: step 1/1. It functions in the pathway bacterial outer membrane biogenesis; LPS lipid A biosynthesis. In terms of biological role, catalyzes the last two sequential reactions in the de novo biosynthetic pathway for UDP-N-acetylglucosamine (UDP-GlcNAc). The C-terminal domain catalyzes the transfer of acetyl group from acetyl coenzyme A to glucosamine-1-phosphate (GlcN-1-P) to produce N-acetylglucosamine-1-phosphate (GlcNAc-1-P), which is converted into UDP-GlcNAc by the transfer of uridine 5-monophosphate (from uridine 5-triphosphate), a reaction catalyzed by the N-terminal domain. In Staphylococcus epidermidis (strain ATCC 35984 / DSM 28319 / BCRC 17069 / CCUG 31568 / BM 3577 / RP62A), this protein is Bifunctional protein GlmU.